A 488-amino-acid chain; its full sequence is Ribulose bisphosphate carboxylase large chain (488 aa).

Residues Asn127 and Thr177 each coordinate substrate. Residue Lys179 is the Proton acceptor of the active site. Lys181 lines the substrate pocket. The Mg(2+) site is built by Lys205, Asp207, and Glu208. Residue Lys205 is modified to N6-carboxylysine. His297 acts as the Proton acceptor in catalysis. Arg298, His330, and Ser382 together coordinate substrate.

It belongs to the RuBisCO large chain family. Type I subfamily. In terms of assembly, heterohexadecamer of 8 large chains and 8 small chains. Mg(2+) serves as cofactor.

It is found in the plastid. The protein localises to the chloroplast. The enzyme catalyses 2 (2R)-3-phosphoglycerate + 2 H(+) = D-ribulose 1,5-bisphosphate + CO2 + H2O. It carries out the reaction D-ribulose 1,5-bisphosphate + O2 = 2-phosphoglycolate + (2R)-3-phosphoglycerate + 2 H(+). Its function is as follows. RuBisCO catalyzes two reactions: the carboxylation of D-ribulose 1,5-bisphosphate, the primary event in carbon dioxide fixation, as well as the oxidative fragmentation of the pentose substrate in the photorespiration process. Both reactions occur simultaneously and in competition at the same active site. The sequence is that of Ribulose bisphosphate carboxylase large chain from Porphyridium aerugineum (Red microalga).